Reading from the N-terminus, the 479-residue chain is 3-phytase B (479 aa).

Residues 1-19 form the signal peptide; the sequence is MPRTSLLTLACALATGASA. H82 acts as the Nucleophile in catalysis. N106, N191, N227, N250, and N315 each carry an N-linked (GlcNAc...) asparagine glycan. The active-site Proton donor is D338. N-linked (GlcNAc...) asparagine glycosylation is found at N425, N442, and N458.

This sequence belongs to the histidine acid phosphatase family.

The enzyme catalyses 1D-myo-inositol hexakisphosphate + H2O = 1D-myo-inositol 1,2,4,5,6-pentakisphosphate + phosphate. In terms of biological role, catalyzes the hydrolysis of inorganic orthophosphate from phytate. This Aspergillus niger protein is 3-phytase B (phyB).